Consider the following 502-residue polypeptide: Mannitol 2-dehydrogenase (502 aa).

35-46 (IVHVGVGGFHRA) is an NAD(+) binding site.

It belongs to the mannitol dehydrogenase family. In terms of assembly, monomer.

The enzyme catalyses D-mannitol + NAD(+) = D-fructose + NADH + H(+). Functionally, catalyzes the NAD(H)-dependent interconversion of D-fructose and D-mannitol in the mannitol metabolic pathway. This chain is Mannitol 2-dehydrogenase, found in Pyricularia oryzae (strain 70-15 / ATCC MYA-4617 / FGSC 8958) (Rice blast fungus).